Consider the following 143-residue polypeptide: Transcriptional regulator SlyA (143 aa).

The 134-residue stretch at 2–135 (ESTLGSDLAR…LANLIERLEQ (134 aa)) folds into the HTH marR-type domain. The H-T-H motif DNA-binding region spans 49–72 (QIQLAKAIGIEQPSLVRTLDQLED).

Belongs to the SlyA family. As to quaternary structure, homodimer.

Its function is as follows. Transcription regulator that can specifically activate or repress expression of target genes. This chain is Transcriptional regulator SlyA, found in Edwardsiella ictaluri (strain 93-146).